Here is a 227-residue protein sequence, read N- to C-terminus: NAD(P)H-quinone oxidoreductase subunit K, chloroplastic (227 aa).

[4Fe-4S] cluster contacts are provided by Cys-43, Cys-44, Cys-108, and Cys-139.

This sequence belongs to the complex I 20 kDa subunit family. In terms of assembly, NDH is composed of at least 16 different subunits, 5 of which are encoded in the nucleus. [4Fe-4S] cluster serves as cofactor.

The protein localises to the plastid. It localises to the chloroplast thylakoid membrane. It catalyses the reaction a plastoquinone + NADH + (n+1) H(+)(in) = a plastoquinol + NAD(+) + n H(+)(out). The enzyme catalyses a plastoquinone + NADPH + (n+1) H(+)(in) = a plastoquinol + NADP(+) + n H(+)(out). NDH shuttles electrons from NAD(P)H:plastoquinone, via FMN and iron-sulfur (Fe-S) centers, to quinones in the photosynthetic chain and possibly in a chloroplast respiratory chain. The immediate electron acceptor for the enzyme in this species is believed to be plastoquinone. Couples the redox reaction to proton translocation, and thus conserves the redox energy in a proton gradient. This is NAD(P)H-quinone oxidoreductase subunit K, chloroplastic from Drimys granadensis.